The sequence spans 98 residues: Co-chaperonin GroES 1 (98 aa).

Belongs to the GroES chaperonin family. Heptamer of 7 subunits arranged in a ring. Interacts with the chaperonin GroEL.

The protein resides in the cytoplasm. Together with the chaperonin GroEL, plays an essential role in assisting protein folding. The GroEL-GroES system forms a nano-cage that allows encapsulation of the non-native substrate proteins and provides a physical environment optimized to promote and accelerate protein folding. GroES binds to the apical surface of the GroEL ring, thereby capping the opening of the GroEL channel. The protein is Co-chaperonin GroES 1 of Rhodopseudomonas palustris (strain ATCC BAA-98 / CGA009).